Here is a 282-residue protein sequence, read N- to C-terminus: NADPH-dependent 7-cyano-7-deazaguanine reductase (282 aa).

Residue 88-90 (IES) participates in substrate binding. An NADPH-binding site is contributed by 90 to 91 (SK). The active-site Thioimide intermediate is C190. D197 (proton donor) is an active-site residue. 229–230 (HE) provides a ligand contact to substrate. 258-259 (RG) provides a ligand contact to NADPH.

Belongs to the GTP cyclohydrolase I family. QueF type 2 subfamily. As to quaternary structure, homodimer.

The protein resides in the cytoplasm. The catalysed reaction is 7-aminomethyl-7-carbaguanine + 2 NADP(+) = 7-cyano-7-deazaguanine + 2 NADPH + 3 H(+). The protein operates within tRNA modification; tRNA-queuosine biosynthesis. In terms of biological role, catalyzes the NADPH-dependent reduction of 7-cyano-7-deazaguanine (preQ0) to 7-aminomethyl-7-deazaguanine (preQ1). The chain is NADPH-dependent 7-cyano-7-deazaguanine reductase from Escherichia coli (strain K12 / MC4100 / BW2952).